The primary structure comprises 57 residues: uncharacterized protein (57 aa).

Residues 1–57 (MDDTLPKQMTPTDTSPLKEEQAHCNNKTLENQPKNINDNKCTDSQNTDLQNTEPSKV) are disordered. Polar residues predominate over residues 23–57 (HCNNKTLENQPKNINDNKCTDSQNTDLQNTEPSKV).

This is an uncharacterized protein from Ornithodoros (relapsing fever ticks).